Here is a 188-residue protein sequence, read N- to C-terminus: dCTP deaminase (188 aa).

Residues 111–116 (KSTYAR), 135–137 (TLE), Gln156, Tyr170, and Gln180 each bind dCTP. Residue Glu137 is the Proton donor/acceptor of the active site.

The protein belongs to the dCTP deaminase family. As to quaternary structure, homotrimer.

It carries out the reaction dCTP + H2O + H(+) = dUTP + NH4(+). It functions in the pathway pyrimidine metabolism; dUMP biosynthesis; dUMP from dCTP (dUTP route): step 1/2. Functionally, catalyzes the deamination of dCTP to dUTP. This Ralstonia pickettii (strain 12J) protein is dCTP deaminase.